A 271-amino-acid chain; its full sequence is Chymotrypsin-like elastase family member 2A (271 aa).

Positions 1-16 are cleaved as a signal peptide; sequence MIRTLLLSALVAGALS. The propeptide at 17 to 30 is activation peptide; it reads CGYPTYEVEDDVSR. Residues 31-269 enclose the Peptidase S1 domain; the sequence is VVGGQEATPN…YIDWINSVMA (239 aa). Cys-60 and Cys-76 form a disulfide bridge. Active-site charge relay system residues include His-75 and Asp-123. Intrachain disulfides connect Cys-157-Cys-224, Cys-188-Cys-204, and Cys-214-Cys-245. Ser-218 acts as the Charge relay system in catalysis.

It belongs to the peptidase S1 family. Elastase subfamily. Interacts with CPA1. Interacts with SERPINA1. In terms of tissue distribution, highly expressed in pancreas (at mRNA and protein levels). Also expressed in adrenal gland and small intestine.

The protein localises to the secreted. It catalyses the reaction Preferential cleavage: Leu-|-Xaa, Met-|-Xaa and Phe-|-Xaa. Hydrolyzes elastin.. Functionally, elastase that enhances insulin signaling and might have a physiologic role in cellular glucose metabolism. Circulates in plasma and reduces platelet hyperactivation, triggers both insulin secretion and degradation, and increases insulin sensitivity. The protein is Chymotrypsin-like elastase family member 2A of Mus musculus (Mouse).